Reading from the N-terminus, the 173-residue chain is uncharacterized protein (173 aa).

Disordered stretches follow at residues 1 to 23 and 48 to 173; these read MGDLPWAPPEAQAPSTAGAGDVA and TGAA…APQR. A compositionally biased stretch (low complexity) spans 49–60; the sequence is GAAPGSAQAGPP. Pro residues predominate over residues 70 to 83; it reads PRGPQAPPRLPPSL. Residues 123 to 136 show a composition bias toward low complexity; it reads PACAGSSAPGSPAA.

This is an uncharacterized protein from Homo sapiens (Human).